Reading from the N-terminus, the 93-residue chain is uncharacterized protein (93 aa).

The segment at 73 to 93 (KWTVSGPVKQDTGKTDPAEKN) is disordered. Positions 83–93 (DTGKTDPAEKN) are enriched in basic and acidic residues.

This is an uncharacterized protein from Rhodobacter capsulatus (Rhodopseudomonas capsulata).